A 129-amino-acid chain; its full sequence is M-zodatoxin-Lt8g (129 aa).

An N-terminal signal peptide occupies residues Met1–Ser20. A propeptide spanning residues Lys21–Arg60 is cleaved from the precursor. The Processing quadruplet motif signature appears at Glu57–Arg60.

Cleavage of the propeptide depends on the processing quadruplet motif (XXXR, with at least one of X being E). As to expression, expressed by the venom gland.

Its subcellular location is the secreted. Insecticidal, cytolytic and antimicrobial peptide. Has insecticidal activity against the flesh fly S.carnaria. Has antibacterial activity against the Gram-negative bacteria E.coli. Forms voltage-dependent, ion-permeable channels in membranes. At high concentration causes cell membrane lysis. In Lachesana tarabaevi (Spider), this protein is M-zodatoxin-Lt8g (cit 1-8).